Reading from the N-terminus, the 204-residue chain is Prephenate decarboxylase (204 aa).

It belongs to the prephenate decarboxylase family.

The protein resides in the cytoplasm. It catalyses the reaction prephenate + H(+) = 3-[(4R)-4-hydroxycyclohexa-1,5-dien-1-yl]-2-oxopropanoate + CO2. It participates in antibiotic biosynthesis; bacilysin biosynthesis. Its function is as follows. Part of the bacABCDEF operon responsible for the biosynthesis of the nonribosomally synthesized dipeptide antibiotic bacilysin, composed of L-alanine and L-anticapsin. Bacilysin is an irreversible inactivator of the glutaminase domain of glucosamine synthetase. BacA is an unusual prephenate decarboxylase that avoids the typical aromatization of the cyclohexadienol ring of prephenate. BacA catalyzes the protonation of prephenate (1-carboxy-4-hydroxy-alpha-oxo-2,5-cyclohexadiene-1-propanoic acid) at C6 position, followed by a decarboxylation to produce the endocyclic-delta(4),delta(8)-7R-dihydro-hydroxyphenylpyruvate (en-H2HPP). En-H2HPP is able to undergo a slow nonenzymatic isomerization to produce the exocyclic-delta(3),delta(5)-dihydro-hydroxyphenylpyruvate (ex-H2HPP). BacA isomerizes only the pro-R double bond in prephenate. This Bacillus subtilis protein is Prephenate decarboxylase.